Reading from the N-terminus, the 812-residue chain is Lon protease (812 aa).

In terms of domain architecture, Lon N-terminal spans 22 to 215; sequence YAVLPLRDIV…KALSFMEAEI (194 aa). Residue 367–374 coordinates ATP; it reads GPPGVGKT. One can recognise a Lon proteolytic domain in the interval 602–783; the sequence is EDQVGVVTGL…GEVLKHALVR (182 aa). Catalysis depends on residues serine 689 and lysine 732. The interval 787–812 is disordered; that stretch reads PIEWTEQENPTAVPPVEDEAGASLAH.

The protein belongs to the peptidase S16 family. Homohexamer. Organized in a ring with a central cavity.

It localises to the cytoplasm. It carries out the reaction Hydrolysis of proteins in presence of ATP.. Its function is as follows. ATP-dependent serine protease that mediates the selective degradation of mutant and abnormal proteins as well as certain short-lived regulatory proteins. Required for cellular homeostasis and for survival from DNA damage and developmental changes induced by stress. Degrades polypeptides processively to yield small peptide fragments that are 5 to 10 amino acids long. Binds to DNA in a double-stranded, site-specific manner. In Brucella melitensis biotype 1 (strain ATCC 23456 / CCUG 17765 / NCTC 10094 / 16M), this protein is Lon protease.